A 273-amino-acid polypeptide reads, in one-letter code: Dermonecrotic toxin LapSicTox-alphaIB1aiv (273 aa).

Histidine 5 is an active-site residue. Mg(2+)-binding residues include glutamate 25 and aspartate 27. Residue histidine 41 is the Nucleophile of the active site. Intrachain disulfides connect cysteine 45–cysteine 51 and cysteine 47–cysteine 190. Aspartate 85 is a Mg(2+) binding site. The N-linked (GlcNAc...) asparagine glycan is linked to asparagine 250.

The protein belongs to the arthropod phospholipase D family. Class II subfamily. It depends on Mg(2+) as a cofactor. In terms of tissue distribution, expressed by the venom gland.

The protein localises to the secreted. The catalysed reaction is an N-(acyl)-sphingosylphosphocholine = an N-(acyl)-sphingosyl-1,3-cyclic phosphate + choline. It catalyses the reaction an N-(acyl)-sphingosylphosphoethanolamine = an N-(acyl)-sphingosyl-1,3-cyclic phosphate + ethanolamine. It carries out the reaction a 1-acyl-sn-glycero-3-phosphocholine = a 1-acyl-sn-glycero-2,3-cyclic phosphate + choline. The enzyme catalyses a 1-acyl-sn-glycero-3-phosphoethanolamine = a 1-acyl-sn-glycero-2,3-cyclic phosphate + ethanolamine. Functionally, dermonecrotic toxins cleave the phosphodiester linkage between the phosphate and headgroup of certain phospholipids (sphingolipid and lysolipid substrates), forming an alcohol (often choline) and a cyclic phosphate. This toxin acts on sphingomyelin (SM). It may also act on ceramide phosphoethanolamine (CPE), lysophosphatidylcholine (LPC) and lysophosphatidylethanolamine (LPE), but not on lysophosphatidylserine (LPS), and lysophosphatidylglycerol (LPG). It acts by transphosphatidylation, releasing exclusively cyclic phosphate products as second products. Induces dermonecrosis, hemolysis, increased vascular permeability, edema, inflammatory response, and platelet aggregation. The protein is Dermonecrotic toxin LapSicTox-alphaIB1aiv of Loxosceles apachea (Apache recluse spider).